An 84-amino-acid polypeptide reads, in one-letter code: Small ribosomal subunit protein uS17 (84 aa).

It belongs to the universal ribosomal protein uS17 family. As to quaternary structure, part of the 30S ribosomal subunit.

Its function is as follows. One of the primary rRNA binding proteins, it binds specifically to the 5'-end of 16S ribosomal RNA. The sequence is that of Small ribosomal subunit protein uS17 from Vibrio parahaemolyticus serotype O3:K6 (strain RIMD 2210633).